The chain runs to 238 residues: Large ribosomal subunit protein uL1 (238 aa).

This sequence belongs to the universal ribosomal protein uL1 family. In terms of assembly, part of the 50S ribosomal subunit.

In terms of biological role, binds directly to 23S rRNA. The L1 stalk is quite mobile in the ribosome, and is involved in E site tRNA release. Protein L1 is also a translational repressor protein, it controls the translation of the L11 operon by binding to its mRNA. The protein is Large ribosomal subunit protein uL1 of Nostoc sp. (strain PCC 7120 / SAG 25.82 / UTEX 2576).